The following is a 171-amino-acid chain: 3-hydroxydecanoyl-[acyl-carrier-protein] dehydratase (171 aa).

His71 is an active-site residue.

It belongs to the thioester dehydratase family. FabA subfamily. Homodimer.

It is found in the cytoplasm. The catalysed reaction is a (3R)-hydroxyacyl-[ACP] = a (2E)-enoyl-[ACP] + H2O. It catalyses the reaction (3R)-hydroxydecanoyl-[ACP] = (2E)-decenoyl-[ACP] + H2O. The enzyme catalyses (2E)-decenoyl-[ACP] = (3Z)-decenoyl-[ACP]. The protein operates within lipid metabolism; fatty acid biosynthesis. Necessary for the introduction of cis unsaturation into fatty acids. Catalyzes the dehydration of (3R)-3-hydroxydecanoyl-ACP to E-(2)-decenoyl-ACP and then its isomerization to Z-(3)-decenoyl-ACP. Can catalyze the dehydratase reaction for beta-hydroxyacyl-ACPs with saturated chain lengths up to 16:0, being most active on intermediate chain length. In Agrobacterium fabrum (strain C58 / ATCC 33970) (Agrobacterium tumefaciens (strain C58)), this protein is 3-hydroxydecanoyl-[acyl-carrier-protein] dehydratase.